The following is a 236-amino-acid chain: Aminopyrimidine aminohydrolase (236 aa).

Asp44 contacts substrate. Cys135 serves as the catalytic Nucleophile. Residues Tyr139 and Tyr163 each coordinate substrate. Glu205 (proton donor) is an active-site residue.

It belongs to the TenA family. As to quaternary structure, homotetramer.

It carries out the reaction 4-amino-5-aminomethyl-2-methylpyrimidine + H2O = 4-amino-5-hydroxymethyl-2-methylpyrimidine + NH4(+). It catalyses the reaction thiamine + H2O = 5-(2-hydroxyethyl)-4-methylthiazole + 4-amino-5-hydroxymethyl-2-methylpyrimidine + H(+). It participates in cofactor biosynthesis; thiamine diphosphate biosynthesis. Functionally, catalyzes an amino-pyrimidine hydrolysis reaction at the C5' of the pyrimidine moiety of thiamine compounds, a reaction that is part of a thiamine salvage pathway. Thus, catalyzes the conversion of 4-amino-5-aminomethyl-2-methylpyrimidine to 4-amino-5-hydroxymethyl-2-methylpyrimidine (HMP). To a lesser extent, is also able to catalyze the hydrolytic cleavage of thiamine; however, this thiaminase activity is unlikely to be physiologically relevant. Therefore, is involved in the regeneration of the thiamine pyrimidine from thiamine degraded products present in the environment, rather than in thiamine degradation. In Bacillus subtilis (strain 168), this protein is Aminopyrimidine aminohydrolase.